The sequence spans 842 residues: Elongation factor 2 (842 aa).

Residues Thr17–Lys253 enclose the tr-type G domain. GTP-binding positions include Ala26–Ser33, Asn158–Asp161, and Ser213–Leu215. Residue His699 is modified to Diphthamide.

The protein belongs to the TRAFAC class translation factor GTPase superfamily. Classic translation factor GTPase family. EF-G/EF-2 subfamily.

Its subcellular location is the cytoplasm. It catalyses the reaction GTP + H2O = GDP + phosphate + H(+). In terms of biological role, catalyzes the GTP-dependent ribosomal translocation step during translation elongation. During this step, the ribosome changes from the pre-translocational (PRE) to the post-translocational (POST) state as the newly formed A-site-bound peptidyl-tRNA and P-site-bound deacylated tRNA move to the P and E sites, respectively. Catalyzes the coordinated movement of the two tRNA molecules, the mRNA and conformational changes in the ribosome. The sequence is that of Elongation factor 2 (EFT1) from Debaryomyces hansenii (strain ATCC 36239 / CBS 767 / BCRC 21394 / JCM 1990 / NBRC 0083 / IGC 2968) (Yeast).